Consider the following 218-residue polypeptide: Guanylate kinase (218 aa).

One can recognise a Guanylate kinase-like domain in the interval 14–193 (GVMLVLSSPS…AFASVRAIVS (180 aa)). 21–28 (SPSGAGKS) is an ATP binding site.

Belongs to the guanylate kinase family.

It is found in the cytoplasm. The enzyme catalyses GMP + ATP = GDP + ADP. In terms of biological role, essential for recycling GMP and indirectly, cGMP. The protein is Guanylate kinase of Chelativorans sp. (strain BNC1).